The sequence spans 1273 residues: Protein sax-3 (1273 aa).

The N-terminal stretch at 1–23 (MFNRKTLLCTILLVLQAVIRSFC) is a signal peptide. 5 Ig-like C2-type domains span residues 31–127 (PVII…GSLK), 133–222 (EDFR…ARLS), 227–312 (PKFE…AHLR), 317–411 (PSFQ…LKVT), and 425–511 (PTIE…ASLT). 5 cysteine pairs are disulfide-bonded: Cys52/Cys110, Cys154/Cys205, Cys248/Cys296, Cys338/Cys393, and Cys446/Cys495. 3 consecutive Fibronectin type-III domains span residues 533–628 (SPTQ…TSKP), 653–750 (QLIK…TAEA), and 755–849 (PPED…MNQD). The chain crosses the membrane as a helical span at residues 874 to 894 (VPVIVIVAILIIFVVIIIAYC). The disordered stretch occupies residues 1033 to 1273 (APAMPTNPVP…NNGIVTQEQT (241 aa)). Residues 1037-1046 (PTNPVPPEPP) are compositionally biased toward pro residues. The segment covering 1096-1105 (QLHSSDGTGS) has biased composition (polar residues). The span at 1106–1115 (SKERTGERRT) shows a compositional bias: basic and acidic residues. Positions 1125-1136 (IPPPPSNPPPPG) are enriched in pro residues. Residues 1145–1156 (QTATRRQLNRGS) are compositionally biased toward polar residues. Positions 1207 to 1222 (MDDDGGSSEADGENSE) are enriched in acidic residues. A compositionally biased stretch (polar residues) spans 1240-1273 (SASTLAHSCYGTNGTAQRFRSIPRNNGIVTQEQT).

This sequence belongs to the immunoglobulin superfamily. ROBO/SAX3 family. As to expression, expressed in the AVG interneuron and the male-specific sensory neuron HOA.

The protein resides in the membrane. Functionally, required to confine migrating sex myoblasts to the ventral muscle quadrants during their migration through the body and for multiple aspects of sensory, motor, and interneuron axon guidance. The polypeptide is Protein sax-3 (Caenorhabditis elegans).